The chain runs to 378 residues: tRNA-specific 2-thiouridylase MnmA (378 aa).

Residues 6–13 (AMSGGVDS) and leucine 32 each bind ATP. The Nucleophile role is filled by cysteine 101. Cysteine 101 and cysteine 199 are joined by a disulfide. Glycine 125 is an ATP binding site. Residues 148–150 (KDQ) form an interaction with tRNA region. Catalysis depends on cysteine 199, which acts as the Cysteine persulfide intermediate.

It belongs to the MnmA/TRMU family.

The protein resides in the cytoplasm. It catalyses the reaction S-sulfanyl-L-cysteinyl-[protein] + uridine(34) in tRNA + AH2 + ATP = 2-thiouridine(34) in tRNA + L-cysteinyl-[protein] + A + AMP + diphosphate + H(+). Its function is as follows. Catalyzes the 2-thiolation of uridine at the wobble position (U34) of tRNA, leading to the formation of s(2)U34. This chain is tRNA-specific 2-thiouridylase MnmA, found in Renibacterium salmoninarum (strain ATCC 33209 / DSM 20767 / JCM 11484 / NBRC 15589 / NCIMB 2235).